Here is a 351-residue protein sequence, read N- to C-terminus: Dihydroorotate dehydrogenase (quinone) (351 aa).

Residues 67 to 71 and threonine 91 contribute to the FMN site; that span reads AGFDK. Residue lysine 71 participates in substrate binding. 116–120 contributes to the substrate binding site; it reads NAMGF. Residues asparagine 145 and asparagine 178 each coordinate FMN. A substrate-binding site is contributed by asparagine 178. Catalysis depends on serine 181, which acts as the Nucleophile. A substrate-binding site is contributed by asparagine 183. Positions 214 and 242 each coordinate FMN. Position 243–244 (243–244) interacts with substrate; that stretch reads NT. FMN contacts are provided by residues glycine 262, glycine 291, and 312 to 313; that span reads YS.

It belongs to the dihydroorotate dehydrogenase family. Type 2 subfamily. In terms of assembly, monomer. Requires FMN as cofactor.

The protein localises to the cell membrane. The enzyme catalyses (S)-dihydroorotate + a quinone = orotate + a quinol. The protein operates within pyrimidine metabolism; UMP biosynthesis via de novo pathway; orotate from (S)-dihydroorotate (quinone route): step 1/1. In terms of biological role, catalyzes the conversion of dihydroorotate to orotate with quinone as electron acceptor. The sequence is that of Dihydroorotate dehydrogenase (quinone) (pyrD) from Helicobacter pylori (strain J99 / ATCC 700824) (Campylobacter pylori J99).